The sequence spans 449 residues: Xylose isomerase (449 aa).

Residues His-103 and Asp-106 contribute to the active site. Mg(2+) contacts are provided by Glu-234, Glu-270, His-273, Asp-298, Asp-309, Asp-311, and Asp-342.

Belongs to the xylose isomerase family. Homotetramer. The cofactor is Mg(2+).

It localises to the cytoplasm. It carries out the reaction alpha-D-xylose = alpha-D-xylulofuranose. The protein is Xylose isomerase of Levilactobacillus brevis (strain ATCC 367 / BCRC 12310 / CIP 105137 / JCM 1170 / LMG 11437 / NCIMB 947 / NCTC 947) (Lactobacillus brevis).